Consider the following 576-residue polypeptide: Sodium/proton antiporter 1 (576 aa).

The N-terminal 60 residues, 1–60, are a transit peptide targeting the chloroplast; that stretch reads MAVFPIGSHFAPPHQLTKRHVIATSSPISISTRLPQNVSFSKVSGVTGSTRLSKHGVLVR. The next 9 membrane-spanning stretches (helical) occupy residues 237-257, 279-299, 320-340, 357-377, 379-399, 426-446, 462-482, 501-521, and 541-561; these read TLLW…DNLT, LGGV…IGDV, FLPS…TSEV, APRG…VPVF, ALTG…LWIL, GALF…AGIL, LIAS…LVAA, LIAF…AAGV, and FAFA…NLHF.

The protein belongs to the NhaD Na(+)/H(+) (TC 2.A.62) antiporter family. In terms of tissue distribution, mostly expressed in mature and senescent leaves, and, to a lower extent, in seeds, roots, shoots, flowers and developing siliques.

The protein localises to the plastid. The protein resides in the chloroplast membrane. Its subcellular location is the chloroplast envelope. Functionally, na(+)/H(+) antiporter that extrudes sodium in exchange for external protons. The polypeptide is Sodium/proton antiporter 1 (Arabidopsis thaliana (Mouse-ear cress)).